Reading from the N-terminus, the 452-residue chain is Mitochondrial distribution and morphology protein 10 (452 aa).

The segment at 105 to 130 is disordered; sequence PLAPESWDSDGPGHEGSDGQEDETTP.

It belongs to the MDM10 family. Component of the ER-mitochondria encounter structure (ERMES) or MDM complex, composed of MMM1, MDM10, MDM12 and MDM34. Associates with the mitochondrial outer membrane sorting assembly machinery SAM(core) complex.

The protein resides in the mitochondrion outer membrane. Its function is as follows. Component of the ERMES/MDM complex, which serves as a molecular tether to connect the endoplasmic reticulum and mitochondria. Components of this complex are involved in the control of mitochondrial shape and protein biogenesis and may function in phospholipid exchange. MDM10 is involved in the late assembly steps of the general translocase of the mitochondrial outer membrane (TOM complex). Functions in the TOM40-specific route of the assembly of outer membrane beta-barrel proteins, including the association of TOM40 with the receptor TOM22 and small TOM proteins. Can associate with the SAM(core) complex as well as the MDM12-MMM1 complex, both involved in late steps of the major beta-barrel assembly pathway, that is responsible for biogenesis of all outer membrane beta-barrel proteins. May act as a switch that shuttles between both complexes and channels precursor proteins into the TOM40-specific pathway. Plays a role in mitochondrial morphology and in the inheritance of mitochondria. This is Mitochondrial distribution and morphology protein 10 from Uncinocarpus reesii (strain UAMH 1704).